The sequence spans 290 residues: Flap endonuclease Xni (290 aa).

Aspartate 125 contacts Mg(2+). One can recognise a 5'-3' exonuclease domain in the interval 181-275 (VKTSQLIDFW…DIRLTTSSSA (95 aa)). Positions 192, 203, and 206 each coordinate K(+). Residues 205-210 (GIGQVT) form an interaction with DNA region.

This sequence belongs to the Xni family. Requires Mg(2+) as cofactor. K(+) is required as a cofactor.

Has flap endonuclease activity. During DNA replication, flap endonucleases cleave the 5'-overhanging flap structure that is generated by displacement synthesis when DNA polymerase encounters the 5'-end of a downstream Okazaki fragment. This Colwellia psychrerythraea (strain 34H / ATCC BAA-681) (Vibrio psychroerythus) protein is Flap endonuclease Xni.